Reading from the N-terminus, the 1273-residue chain is Paired amphipathic helix protein Sin3a (1273 aa).

Disordered stretches follow at residues 1–23 (MKRR…IPGS) and 87–110 (HPTA…PPVA). Position 10 is a phosphoserine (Ser10). The 71-residue stretch at 119–189 (QRLKVEDALS…MGFNTFLPPG (71 aa)) folds into the PAH 1 domain. Residues 119 to 196 (QRLKVEDALS…PPGYKIEVQT (78 aa)) are interaction with HCFC1. Residues Lys122 and Lys134 each participate in a glycyl lysine isopeptide (Lys-Gly) (interchain with G-Cter in SUMO2) cross-link. The interval 205-297 (PGQVHQIPTH…ISLGTAPSLQ (93 aa)) is disordered. Positions 205–480 (PGQVHQIPTH…RKALRSAEAY (276 aa)) are interaction with REST. The span at 228–237 (SQPSAQSAPA) shows a compositional bias: low complexity. Positions 238–248 (PAQPAPQPPPA) are enriched in pro residues. Positions 252–266 (KPSQLQAHTPASQQT) are enriched in polar residues. The span at 267 to 282 (PPLPPYASPRSPPVQP) shows a compositional bias: pro residues. Ser277 is subject to Phosphoserine. Position 284 is a phosphothreonine (Thr284). Residues 284–297 (TPVTISLGTAPSLQ) are compositionally biased toward polar residues. The 84-residue stretch at 300–383 (QPVEFNHAIN…SEFGQFLPDA (84 aa)) folds into the PAH 2 domain. The tract at residues 398-446 (DSVRNDHGGTVKKPQLNNKPQRPSQNGCQIRRHPTGTTPPVKKKPKLLN) is disordered. Positions 412-425 (QLNNKPQRPSQNGC) are enriched in polar residues. Residues 456 to 525 (SKHGGGTESL…NWFKNFLGYK (70 aa)) form the PAH 3 domain. Positions 458 to 525 (HGGGTESLFF…NWFKNFLGYK (68 aa)) are interaction with SAP30. The residue at position 469 (Lys469) is an N6-acetyllysine. Residues 523–850 (GYKESVHLET…EMDVDEATGA (328 aa)) form an interaction with NCOR1 region. The segment at 524 to 659 (YKESVHLETY…KFRLDNTLGG (136 aa)) is interaction with SUDS3 and SAP130. Lys563 is covalently cross-linked (Glycyl lysine isopeptide (Lys-Gly) (interchain with G-Cter in SUMO2)). The segment at 687-829 (NPSIAVPIVL…IPDLLFAQRG (143 aa)) is interaction with HDAC1 and ARID4B. Phosphoserine is present on residues Ser832 and Ser860. N6-acetyllysine occurs at positions 865 and 875. Positions 888–967 (VNNNWYIFMR…YYPAFLDMVR (80 aa)) are interaction with OGT. The stretch at 903–932 (CLRLLRICSQAERQIEEENREREWEREVLG) forms a coiled coil. Phosphoserine is present on residues Ser940, Ser1089, and Ser1112. Residues 1136-1156 (CQRGREQQEKEGKEGNSKKTM) form a disordered region. A compositionally biased stretch (basic and acidic residues) spans 1138-1156 (RGREQQEKEGKEGNSKKTM).

As to quaternary structure, interacts with ARID4B, BRMS1L, HCFC1, HDAC1, HDAC2, MXI1, SAP30L, SAP130, SFPQ and TOPORS. Interacts with OGT (via TPRs 1-6); the interaction mediates transcriptional repression in parallel with histone deacetylase. Interacts with BAZ2A, MXD1, MXD3, MXD4, MBD2, DACH1, NCOR1, NR4A2, REST, RLIM, SAP30, SETDB1, SMYD2, and SUDS3. Interacts with PHF12 in a complex composed of HDAC1, PHF12 and SAP30. Interacts with TET1; the interaction recruits SIN3A to gene promoters. The large PER complex involved in the histone deacetylation is composed of at least HDAC1, PER2, SFPQ and SIN3A. Interacts with KLF11. Interacts with PPHLN1. Found in a complex with YY1, GON4L and HDAC1. Interacts (via PAH2) with FOXK1. Interacts with FOXK2. Found in a complex composed of at least SINHCAF, SIN3A, HDAC1, SAP30, RBBP4, OGT and TET1. Interacts with SINHCAF. Interacts with SPHK2. SUMO1 sumoylated by TOPORS. Probably desumoylated by SENP2. In terms of tissue distribution, expressed in the developing brain, with highest levels of expression detected in the ventricular zone of various cortical regions.

The protein localises to the nucleus. It is found in the nucleolus. Functionally, acts as a transcriptional repressor. Corepressor for REST. Interacts with MXI1 to repress MYC responsive genes and antagonize MYC oncogenic activities. Also interacts with MXD1-MAX heterodimers to repress transcription by tethering SIN3A to DNA. Acts cooperatively with OGT to repress transcription in parallel with histone deacetylation. Involved in the control of the circadian rhythms. Required for the transcriptional repression of circadian target genes, such as PER1, mediated by the large PER complex through histone deacetylation. Cooperates with FOXK1 to regulate cell cycle progression probably by repressing cell cycle inhibitor genes expression. Required for cortical neuron differentiation and callosal axon elongation. This Homo sapiens (Human) protein is Paired amphipathic helix protein Sin3a.